The chain runs to 387 residues: Succinate--CoA ligase [ADP-forming] subunit beta (387 aa).

The ATP-grasp domain maps to 9-244; it reads KEVLRKFGVA…LNEEEPSEIE (236 aa). Residues Lys46, 53-55, Glu99, Cys102, and Glu107 each bind ATP; that span reads GRG. 2 residues coordinate Mg(2+): Asn199 and Asp213. Substrate contacts are provided by residues Asn264 and 321–323; that span reads GIM.

This sequence belongs to the succinate/malate CoA ligase beta subunit family. In terms of assembly, heterotetramer of two alpha and two beta subunits. The cofactor is Mg(2+).

It catalyses the reaction succinate + ATP + CoA = succinyl-CoA + ADP + phosphate. The enzyme catalyses GTP + succinate + CoA = succinyl-CoA + GDP + phosphate. Its pathway is carbohydrate metabolism; tricarboxylic acid cycle; succinate from succinyl-CoA (ligase route): step 1/1. Succinyl-CoA synthetase functions in the citric acid cycle (TCA), coupling the hydrolysis of succinyl-CoA to the synthesis of either ATP or GTP and thus represents the only step of substrate-level phosphorylation in the TCA. The beta subunit provides nucleotide specificity of the enzyme and binds the substrate succinate, while the binding sites for coenzyme A and phosphate are found in the alpha subunit. This Bdellovibrio bacteriovorus (strain ATCC 15356 / DSM 50701 / NCIMB 9529 / HD100) protein is Succinate--CoA ligase [ADP-forming] subunit beta.